Consider the following 190-residue polypeptide: Major intrinsically disordered NOTCH2-binding receptor 1-like (190 aa).

Ser-79 carries the post-translational modification Phosphoserine. Asn-109 and Asn-125 each carry an N-linked (GlcNAc...) asparagine glycan. The chain crosses the membrane as a helical span at residues 169-189 (GLILLVVISILVTIVTIITFF).

Belongs to the MINAR family. Interacts with NOTCH2. As to expression, highly expressed in the auditory hair cells.

It is found in the lysosome membrane. Its subcellular location is the endoplasmic reticulum membrane. Binds cholesterol and may regulate the distribution and homeostasis of cholesterol in hair cells. May play a role in angiogenesis. The polypeptide is Major intrinsically disordered NOTCH2-binding receptor 1-like (Homo sapiens (Human)).